The following is a 406-amino-acid chain: uncharacterized protein (406 aa).

The protein localises to the plastid. Its subcellular location is the chloroplast. This is an uncharacterized protein from Euglena gracilis.